The primary structure comprises 138 residues: Putative pre-16S rRNA nuclease (138 aa).

This sequence belongs to the YqgF nuclease family.

It localises to the cytoplasm. Could be a nuclease involved in processing of the 5'-end of pre-16S rRNA. The polypeptide is Putative pre-16S rRNA nuclease (Escherichia coli O157:H7).